The following is a 474-amino-acid chain: 2-succinylbenzoate--CoA ligase (474 aa).

Belongs to the ATP-dependent AMP-binding enzyme family. MenE subfamily.

It catalyses the reaction 2-succinylbenzoate + ATP + CoA = 2-succinylbenzoyl-CoA + AMP + diphosphate. The protein operates within quinol/quinone metabolism; 1,4-dihydroxy-2-naphthoate biosynthesis; 1,4-dihydroxy-2-naphthoate from chorismate: step 5/7. It functions in the pathway quinol/quinone metabolism; menaquinone biosynthesis. In terms of biological role, converts 2-succinylbenzoate (OSB) to 2-succinylbenzoyl-CoA (OSB-CoA). The polypeptide is 2-succinylbenzoate--CoA ligase (Staphylococcus epidermidis (strain ATCC 12228 / FDA PCI 1200)).